The chain runs to 417 residues: NADH-quinone oxidoreductase subunit D (417 aa).

This sequence belongs to the complex I 49 kDa subunit family. NDH-1 is composed of 14 different subunits. Subunits NuoB, C, D, E, F, and G constitute the peripheral sector of the complex.

It is found in the cell inner membrane. The catalysed reaction is a quinone + NADH + 5 H(+)(in) = a quinol + NAD(+) + 4 H(+)(out). In terms of biological role, NDH-1 shuttles electrons from NADH, via FMN and iron-sulfur (Fe-S) centers, to quinones in the respiratory chain. The immediate electron acceptor for the enzyme in this species is believed to be ubiquinone. Couples the redox reaction to proton translocation (for every two electrons transferred, four hydrogen ions are translocated across the cytoplasmic membrane), and thus conserves the redox energy in a proton gradient. This is NADH-quinone oxidoreductase subunit D from Paraburkholderia phytofirmans (strain DSM 17436 / LMG 22146 / PsJN) (Burkholderia phytofirmans).